Reading from the N-terminus, the 396-residue chain is Bifunctional enzyme Fae/Hps (396 aa).

Positions methionine 1 to valine 161 are formaldehyde-activating enzyme. Histidine 17 (proton donor) is an active-site residue. Substrate contacts are provided by aspartate 19, leucine 48, lysine 66, threonine 68, and glutamine 83. Residues methionine 162 to phenylalanine 396 are 3-hexulose-6-phosphate synthase.

In the N-terminal section; belongs to the formaldehyde-activating enzyme family. This sequence in the C-terminal section; belongs to the HPS/KGPDC family. HPS subfamily.

It catalyses the reaction 5,6,7,8-tetrahydromethanopterin + formaldehyde = 5,10-methylenetetrahydromethanopterin + H2O. The enzyme catalyses D-ribulose 5-phosphate + formaldehyde = D-arabino-hex-3-ulose 6-phosphate. The protein operates within carbohydrate biosynthesis; D-ribose 5-phosphate biosynthesis. Its function is as follows. Catalyzes the condensation of formaldehyde with tetrahydromethanopterin (H(4)MPT) to 5,10-methylenetetrahydromethanopterin. Functionally, catalyzes the reversible formation of ribulose-5-phosphate and formaldehyde from 3-hexulose-6-phosphate. This Methanococcoides burtonii (strain DSM 6242 / NBRC 107633 / OCM 468 / ACE-M) protein is Bifunctional enzyme Fae/Hps.